The primary structure comprises 334 residues: RNA ligase 2 (334 aa).

Residues 1 to 234 are adenylyltransferase; sequence MFKKYSSLEN…KCKNSKFSEK (234 aa). AMP is bound by residues Glu34, Lys35, Ile36, Asn40, Arg55, and Glu99. The active-site N6-AMP-lysine intermediate is Lys35. Mg(2+)-binding residues include Ile162, Leu164, Asn166, Glu204, and Tyr206. Positions 225 and 227 each coordinate AMP.

The protein belongs to the RNA ligase 2 family. The cofactor is Mg(2+). Mn(2+) serves as cofactor.

The enzyme catalyses ATP + (ribonucleotide)n-3'-hydroxyl + 5'-phospho-(ribonucleotide)m = (ribonucleotide)n+m + AMP + diphosphate.. In terms of biological role, repairs 3'-OH/5'-PO4 nicks in duplex RNA or RNA:DNA hybrid in which the broken 3'-OH strand is RNA. The nick ligation reaction entails three nucleotidyl transfer steps. In the first step, the RNA ligase reacts with ATP in the absence of nucleic acid to form a covalent ligase-AMP intermediate and release pyrophosphate. In step 2, the ligase-AMP binds to the nicked duplex nucleic acid and transfers the adenylate to the 5'-PO4 terminus to form an adenylylated nicked intermediate. In step 3, the RNA ligase directs the attack of the nick 3'-OH on the 5'-phosphoanhydride linkage, resulting in a repaired 3' - 5' phosphodiester and release of AMP. The polypeptide is RNA ligase 2 (Y10A) (Enterobacteria phage T4 (Bacteriophage T4)).